Consider the following 200-residue polypeptide: MDNMLQFMKLVGQLKRVPRTGWVYRNIKQPESVSDHMYRMSMMALTIQDISVNKERCMKLALVHDLAECIVGDIAPADNVSKAEKHRREKDAMVHITGLLDDGLRKEIYNLWEEYETQSSPEAKLVKELDNLEMIIQAHEYEELEGKPGRLQEFFVSTEGKFHHPEVLGLLKSLNEERARHIAAGGEKTTDTDSLTLAKP.

An HD domain is found at 33 to 135 (VSDHMYRMSM…VKELDNLEMI (103 aa)). Residues His36, His64, Asp65, Glu68, Asp73, Ile74, and Asp130 each contribute to the a divalent metal cation site.

It belongs to the HDDC2 family. In terms of assembly, homodimer. It depends on Mn(2+) as a cofactor. The cofactor is Co(2+). Requires Mg(2+) as cofactor.

The catalysed reaction is a 2'-deoxyribonucleoside 5'-phosphate + H2O = a 2'-deoxyribonucleoside + phosphate. Catalyzes the dephosphorylation of the nucleoside 5'-monophosphates deoxyadenosine monophosphate (dAMP), deoxycytidine monophosphate (dCMP), deoxyguanosine monophosphate (dGMP) and deoxythymidine monophosphate (dTMP). The protein is 5'-deoxynucleotidase HDDC2 (hddc2) of Danio rerio (Zebrafish).